The following is a 386-amino-acid chain: Succinate--CoA ligase [ADP-forming] subunit beta (386 aa).

In terms of domain architecture, ATP-grasp spans 9–244; that stretch reads KEVLRKYGVV…LDEEDADEIE (236 aa). Residues K46, 53-55, E99, A102, and E107 each bind ATP; that span reads GRG. 2 residues coordinate Mg(2+): N199 and D213. Substrate is bound by residues N264 and 321–323; that span reads GIM.

The protein belongs to the succinate/malate CoA ligase beta subunit family. As to quaternary structure, heterotetramer of two alpha and two beta subunits. Mg(2+) serves as cofactor.

The enzyme catalyses succinate + ATP + CoA = succinyl-CoA + ADP + phosphate. The catalysed reaction is GTP + succinate + CoA = succinyl-CoA + GDP + phosphate. It functions in the pathway carbohydrate metabolism; tricarboxylic acid cycle; succinate from succinyl-CoA (ligase route): step 1/1. Succinyl-CoA synthetase functions in the citric acid cycle (TCA), coupling the hydrolysis of succinyl-CoA to the synthesis of either ATP or GTP and thus represents the only step of substrate-level phosphorylation in the TCA. The beta subunit provides nucleotide specificity of the enzyme and binds the substrate succinate, while the binding sites for coenzyme A and phosphate are found in the alpha subunit. The polypeptide is Succinate--CoA ligase [ADP-forming] subunit beta (Azoarcus sp. (strain BH72)).